Reading from the N-terminus, the 700-residue chain is Elongation factor G (700 aa).

Residues 10–286 enclose the tr-type G domain; sequence TKVRNIGIMA…AVVDYLPSPL (277 aa). GTP-binding positions include 19–26, 83–87, and 137–140; these read AHIDAGKT, DTPGH, and NKMD.

It belongs to the TRAFAC class translation factor GTPase superfamily. Classic translation factor GTPase family. EF-G/EF-2 subfamily.

It localises to the cytoplasm. Functionally, catalyzes the GTP-dependent ribosomal translocation step during translation elongation. During this step, the ribosome changes from the pre-translocational (PRE) to the post-translocational (POST) state as the newly formed A-site-bound peptidyl-tRNA and P-site-bound deacylated tRNA move to the P and E sites, respectively. Catalyzes the coordinated movement of the two tRNA molecules, the mRNA and conformational changes in the ribosome. This chain is Elongation factor G, found in Saccharopolyspora erythraea (strain ATCC 11635 / DSM 40517 / JCM 4748 / NBRC 13426 / NCIMB 8594 / NRRL 2338).